The primary structure comprises 193 residues: Surfactant protein C (193 aa).

A propeptide spanning residues 1-23 (MDMSSKEVLMESPPDYSAGPRSQ) is cleaved from the precursor. Residues Cys-28 and Cys-29 are each lipidated (S-palmitoyl cysteine). A propeptide spanning residues 59–193 (HMSQKHTEMV…LCGELPLYYI (135 aa)) is cleaved from the precursor. The region spanning 94 to 193 (FSIGSTGIVV…LCGELPLYYI (100 aa)) is the BRICHOS domain. A disulfide bond links Cys-121 and Cys-185. A disordered region spans residues 147-170 (KPSTPTSKLGQEEGHDTGSESDSS).

The protein resides in the secreted. It localises to the extracellular space. Its subcellular location is the surface film. In terms of biological role, pulmonary surfactant associated proteins promote alveolar stability by lowering the surface tension at the air-liquid interface in the peripheral air spaces. The chain is Surfactant protein C from Mus musculus (Mouse).